The primary structure comprises 503 residues: Long-chain-aldehyde dehydrogenase (503 aa).

Residue 218–224 (GYGAEVG) participates in NAD(+) binding. Residues E262 and C301 contribute to the active site.

Belongs to the aldehyde dehydrogenase family. Homotetramer.

The catalysed reaction is a long-chain fatty aldehyde + NAD(+) + H2O = a long-chain fatty acid + NADH + 2 H(+). With respect to regulation, completely inhibited by p-chloromercuribenzoate and N-ethylmaleimide. Strongly inhibited by iodoacetate. Inhibited by Pb(2+), Fe(3+), Ag(+) and Hg(2+) and partially inhibited by several other metal ions Mn(2+), Zn(2+) and Cu(2+). Functionally, aldehyde dehydrogenase that shows activity toward n-alkanals (C(4) to C(14)), with a preference for longer carbon chains. The best substrate is tetradecanal. The polypeptide is Long-chain-aldehyde dehydrogenase (ald1) (Acinetobacter sp).